Here is a 219-residue protein sequence, read N- to C-terminus: Vesicle-associated membrane protein 711 (219 aa).

Position 2 is an N-acetylalanine (Ala-2). Residues 2–189 are Cytoplasmic-facing; it reads AILYALVARG…RSNVWWRNCK (188 aa). The Longin domain occupies 7–111; sequence LVARGTVVLS…AMNEEFSRVL (105 aa). The v-SNARE coiled-coil homology domain maps to 126-186; sequence RINRIKGEMN…RRFRSNVWWR (61 aa). The helical; Anchor for type IV membrane protein transmembrane segment at 190-210 threads the bilayer; the sequence is LTVLLILLLLVIIYIAVAFLC. Topologically, residues 211-219 are vesicular; the sequence is HGPTLPSCI.

It belongs to the synaptobrevin family. Expressed in flowers, leaves, stems and roots.

It localises to the vacuole membrane. Its subcellular location is the prevacuolar compartment membrane. In terms of biological role, involved in the targeting and/or fusion of transport vesicles to their target membrane. This chain is Vesicle-associated membrane protein 711, found in Arabidopsis thaliana (Mouse-ear cress).